The chain runs to 323 residues: tRNA U34 carboxymethyltransferase (323 aa).

Residues K91, W105, K110, G130, 181–182, M196, Y200, and R315 each bind carboxy-S-adenosyl-L-methionine; that span reads IE.

Belongs to the class I-like SAM-binding methyltransferase superfamily. CmoB family. In terms of assembly, homotetramer.

The catalysed reaction is carboxy-S-adenosyl-L-methionine + 5-hydroxyuridine(34) in tRNA = 5-carboxymethoxyuridine(34) in tRNA + S-adenosyl-L-homocysteine + H(+). Its function is as follows. Catalyzes carboxymethyl transfer from carboxy-S-adenosyl-L-methionine (Cx-SAM) to 5-hydroxyuridine (ho5U) to form 5-carboxymethoxyuridine (cmo5U) at position 34 in tRNAs. The sequence is that of tRNA U34 carboxymethyltransferase from Yersinia pseudotuberculosis serotype O:1b (strain IP 31758).